Here is a 288-residue protein sequence, read N- to C-terminus: Acetylglutamate kinase (288 aa).

Residues 73 to 74, Arg-95, and Asn-186 each bind substrate; that span reads GG.

This sequence belongs to the acetylglutamate kinase family. ArgB subfamily.

It localises to the cytoplasm. The enzyme catalyses N-acetyl-L-glutamate + ATP = N-acetyl-L-glutamyl 5-phosphate + ADP. It functions in the pathway amino-acid biosynthesis; L-arginine biosynthesis; N(2)-acetyl-L-ornithine from L-glutamate: step 2/4. Functionally, catalyzes the ATP-dependent phosphorylation of N-acetyl-L-glutamate. The sequence is that of Acetylglutamate kinase from Pelagibacter ubique (strain HTCC1062).